A 156-amino-acid chain; its full sequence is Protein CROC-4 (156 aa).

The segment at 46–71 is disordered; that stretch reads RATSSTTDSSRAPSSPRPPGSTSHCG. Residues 48–59 are compositionally biased toward low complexity; the sequence is TSSTTDSSRAPS.

As to expression, expressed throughout the brain in the thalamus, subthalamic nucleus, corpus callosum, hippocampus, substantia nigra, caudate nucleus, and amygdala.

The protein localises to the nucleus. Functionally, may play a role in FOS signaling pathways involved in development and remodeling of neurons. Promotes transcription of the FOS promoter. This is Protein CROC-4 from Homo sapiens (Human).